The following is a 261-amino-acid chain: Ribosome-inactivating protein PD-L3/PD-L4 (261 aa).

N-linked (GlcNAc...) asparagine; in PD-L3 glycosylation occurs at asparagine 10. Cystine bridges form between cysteine 34–cysteine 258 and cysteine 84–cysteine 105. Glutamate 175 is an active-site residue.

Belongs to the ribosome-inactivating protein family. Type 1 RIP subfamily.

It catalyses the reaction Endohydrolysis of the N-glycosidic bond at one specific adenosine on the 28S rRNA.. Inhibits protein synthesis. Does not cleave supercoiled pBR322 dsDNA. The chain is Ribosome-inactivating protein PD-L3/PD-L4 from Phytolacca dioica (Bella sombra tree).